Consider the following 350-residue polypeptide: Methionine import ATP-binding protein MetN (350 aa).

The 240-residue stretch at 2–241 (IQIKNLKKEY…PQAPVTRSFV (240 aa)) folds into the ABC transporter domain. ATP is bound at residue 38–45 (GHSGAGKS).

This sequence belongs to the ABC transporter superfamily. Methionine importer (TC 3.A.1.24) family. The complex is composed of two ATP-binding proteins (MetN), two transmembrane proteins (MetI) and a solute-binding protein (MetQ).

The protein resides in the cell inner membrane. The enzyme catalyses L-methionine(out) + ATP + H2O = L-methionine(in) + ADP + phosphate + H(+). It carries out the reaction D-methionine(out) + ATP + H2O = D-methionine(in) + ADP + phosphate + H(+). Its function is as follows. Part of the ABC transporter complex MetNIQ involved in methionine import. Responsible for energy coupling to the transport system. This Francisella tularensis subsp. tularensis (strain FSC 198) protein is Methionine import ATP-binding protein MetN.